Consider the following 494-residue polypeptide: MELLGFTTLALVVSVTCLSLLSVWTKLRTRGRLPPGPTPLPIIGNLLQLNLKDIPASLSKLAKEYGPVYTLYFGTSPTVVLHGYDVVKEALLQQGDEFLGRGPLPIIEDTHKGYGLIFSNGERWKVMRRFSLMTLRNFGMGKRSLEERVQEEARCLVEELQKTKAQPFDPTFILACAPCNVICSILFNDRFQYNDKTFLNLMDLLNKNFQQVNSVWCQMYNLWPTIIKYLPGKHIEFAKRIDDVKNFILEKVKEHQKSLDPANPRDYIDCFLSKIEEEKDNLKSEFHLENLAVCGSNLFTAGTETTSTTLRFGLLLLMKYPEVQAKVHEELDRVIGRHQPPSMKDKMKLPYTDAVLHEIQRYITLLPSSLPHAVVQDTKFRDYVIPKGTTVLPMLSSVMLDQKEFANPEKFDPGHFLDKNGCFKKTDYFVPFSLGKRACVGESLARMELFLFFTTLLQKFSLKTLVEPKDLDIKPITTGIINLPPPYKLCLVPR.

Ser-131 is modified (phosphoserine). An N6-acetyllysine mark is found at Lys-253 and Lys-379. Cys-439 is a heme binding site.

The protein belongs to the cytochrome P450 family. Heme is required as a cofactor. In terms of tissue distribution, expressed in kidney and liver. Expressed in cortical tubules of kidney (at protein level).

It is found in the endoplasmic reticulum membrane. The protein localises to the microsome membrane. The catalysed reaction is (5Z,8Z,11Z,14Z)-eicosatetraenoate + reduced [NADPH--hemoprotein reductase] + O2 = (8R,9S)-epoxy-(5Z,11Z,14Z)-eicosatrienoate + oxidized [NADPH--hemoprotein reductase] + H2O + H(+). It catalyses the reaction (5Z,8Z,11Z,14Z)-eicosatetraenoate + reduced [NADPH--hemoprotein reductase] + O2 = (11R,12S)-epoxy-(5Z,8Z,14Z)-eicosatrienoate + oxidized [NADPH--hemoprotein reductase] + H2O + H(+). The enzyme catalyses (5Z,8Z,11Z,14Z)-eicosatetraenoate + reduced [NADPH--hemoprotein reductase] + O2 = (11S,12R)-epoxy-(5Z,8Z,14Z)-eicosatrienoate + oxidized [NADPH--hemoprotein reductase] + H2O + H(+). It carries out the reaction (5Z,8Z,11Z,14Z)-eicosatetraenoate + reduced [NADPH--hemoprotein reductase] + O2 = (14R,15S)-epoxy-(5Z,8Z,11Z)-eicosatrienoate + oxidized [NADPH--hemoprotein reductase] + H2O + H(+). The catalysed reaction is (5Z,8Z,11Z,14Z)-eicosatetraenoate + reduced [NADPH--hemoprotein reductase] + O2 = (14S,15R)-epoxy-(5Z,8Z,11Z)-eicosatrienoate + oxidized [NADPH--hemoprotein reductase] + H2O + H(+). It catalyses the reaction (5Z,8Z,11Z,14Z,17Z)-eicosapentaenoate + reduced [NADPH--hemoprotein reductase] + O2 = 8,9-epoxy-(5Z,11Z,14Z,17Z)-eicosatetraenoate + oxidized [NADPH--hemoprotein reductase] + H2O + H(+). The enzyme catalyses (5Z,8Z,11Z,14Z,17Z)-eicosapentaenoate + reduced [NADPH--hemoprotein reductase] + O2 = 11,12-epoxy-(5Z,8Z,14Z,17Z)-eicosatetraenoate + oxidized [NADPH--hemoprotein reductase] + H2O + H(+). It carries out the reaction (5Z,8Z,11Z,14Z,17Z)-eicosapentaenoate + reduced [NADPH--hemoprotein reductase] + O2 = 14,15-epoxy-(5Z,8Z,11Z,17Z)-eicosatetraenoate + oxidized [NADPH--hemoprotein reductase] + H2O + H(+). The catalysed reaction is (5Z,8Z,11Z,14Z,17Z)-eicosapentaenoate + reduced [NADPH--hemoprotein reductase] + O2 = (17R,18S)-epoxy-(5Z,8Z,11Z,14Z)-eicosatetraenoate + oxidized [NADPH--hemoprotein reductase] + H2O + H(+). It catalyses the reaction (5Z,8Z,11Z,14Z,17Z)-eicosapentaenoate + reduced [NADPH--hemoprotein reductase] + O2 = (17S,18R)-epoxy-(5Z,8Z,11Z,14Z)-eicosatetraenoate + oxidized [NADPH--hemoprotein reductase] + H2O + H(+). The enzyme catalyses 20-hydroxy-(5Z,8Z,11Z,14Z)-eicosatetraenoate + reduced [NADPH--hemoprotein reductase] + O2 = 20-hydroxy-8,9-epoxy-(5Z,11Z,14Z)-eicosatrienoate + oxidized [NADPH--hemoprotein reductase] + H2O + H(+). Its pathway is lipid metabolism; arachidonate metabolism. In terms of biological role, a cytochrome P450 monooxygenase involved in polyunsaturated fatty acids (PUFAs) metabolism and signaling. Catalyzes preferentially the epoxidation of double bonds of PUFAs. Converts arachidonic acid (ARA, C20:4(n-6)) primarily to stereospecific products 8R,9S-, 11R,12S-, and 14S,15R-EET. Plays a major role in the formation of EETs and hydroxy-EETs (HEETs) in kidney. Via EETs may inhibit the epithelial sodium channels (ENaCs) in nephron segments, preventing excessive sodium absorption during high dietary salt intake. Participates in the formation of anti-inflammatory hydroxyepoxyeicosatrienoic acids (HEETs) by converting 20-hydroxyeicosatetraenoic acid (20-HETE) to 20,8,9-HEET, an activator of PPARA. Metabolizes eicosapentaenoic acid (EPA, C20:5(n-3)) to epoxyeicosatetraenoic acid (EETeTr) regioisomers, 8,9-, 11,12-, 14,15-, and 17,18-EETeTr, preferentially producing 17R,18S enantiomer. Mechanistically, uses molecular oxygen inserting one oxygen atom into a substrate, and reducing the second into a water molecule, with two electrons provided by NADPH via cytochrome P450 reductase (NADPH--hemoprotein reductase). This chain is Cytochrome P450 2C23, found in Rattus norvegicus (Rat).